The following is a 196-amino-acid chain: uncharacterized protein (196 aa).

This is an uncharacterized protein from Acanthamoeba polyphaga mimivirus (APMV).